We begin with the raw amino-acid sequence, 198 residues long: MVATQNKNLKPNRKHQILESLALMLQNCPGQRITTAKLAAEVGFSEAALYRHFPSKARMFEGLIDFIEESIFSRINLILADHKEALVRCHHILHVLVVFAERNPGMCRILAGDALMGENERLRGRVHQFFEKLESQFKQVLRERKLREGKTFTINEAALASLLVSFAEGKISQYVRSGYSKKPSTDFNEQWQFLMANK.

In terms of domain architecture, HTH tetR-type spans proline 11 to isoleucine 71. The H-T-H motif DNA-binding region spans threonine 34 to phenylalanine 53.

The protein belongs to the nucleoid occlusion factor SlmA family. As to quaternary structure, homodimer. Interacts with FtsZ.

The protein localises to the cytoplasm. It is found in the nucleoid. Its function is as follows. Required for nucleoid occlusion (NO) phenomenon, which prevents Z-ring formation and cell division over the nucleoid. Acts as a DNA-associated cell division inhibitor that binds simultaneously chromosomal DNA and FtsZ, and disrupts the assembly of FtsZ polymers. SlmA-DNA-binding sequences (SBS) are dispersed on non-Ter regions of the chromosome, preventing FtsZ polymerization at these regions. The chain is Nucleoid occlusion factor SlmA from Colwellia psychrerythraea (strain 34H / ATCC BAA-681) (Vibrio psychroerythus).